The chain runs to 321 residues: Methyltransferase cfoB (321 aa).

It belongs to the methyltransferase superfamily.

It participates in secondary metabolite biosynthesis; flavonoid biosynthesis. Methyltransferase; part of the gene cluster that mediates the biosynthesis of chlorflavonin, a fungal flavonoid with acetolactate synthase inhibitory activity. Within the pathway, cfoB is responsible for the methylation at position C7-OH of flavonoid. The pathway begins with the PKS-NRPS hybrid synthetase cfoA that uses benzoic acid or p-hydroxybenzoic acid as a starter unit with four rounds of chain elongation using malonyl-CoA to form the chalcone skeleton. Then, a new type of chalcone isomerase, cfoK, catalyzes the conversion of the chalcone into a flavanone by a histidine-mediated oxa-Michael addition mechanism. The desaturation of flavanone to flavone is catalyzed by a new type of flavone synthase, the flavin mononucleotide (FMN)-dependent oxidoreductase cfoJ. Monooxygenases cfoF, cfoG, and P450 cfoH are responsible for the hydroxylation of the flavonoid skeleton at sites C3, C8, and C2', respectively. Like cfoF, the dehydratase cfoI also plays a role in the hydroxylation of position C3. Methyltransferases cfoB, cfoC, and cfoD then catalyze the methylation of C7-OH, C8-OH, and C3-OH, respectively. Finally, the monooxygenase cfoE is responsible for the chlorination of flavonoid at position C3'. The chain is Methyltransferase cfoB from Aspergillus candidus.